The chain runs to 152 residues: Endoribonuclease YbeY (152 aa).

3 residues coordinate Zn(2+): His-114, His-118, and His-124.

The protein belongs to the endoribonuclease YbeY family. Zn(2+) is required as a cofactor.

It is found in the cytoplasm. Its function is as follows. Single strand-specific metallo-endoribonuclease involved in late-stage 70S ribosome quality control and in maturation of the 3' terminus of the 16S rRNA. The chain is Endoribonuclease YbeY from Wigglesworthia glossinidia brevipalpis.